The chain runs to 98 residues: Ribonuclease P protein component 4 (98 aa).

Residues Cys-62, Cys-65, Cys-85, and Cys-88 each contribute to the Zn(2+) site.

This sequence belongs to the eukaryotic/archaeal RNase P protein component 4 family. As to quaternary structure, consists of a catalytic RNA component and at least 4-5 protein subunits. It depends on Zn(2+) as a cofactor.

Its subcellular location is the cytoplasm. It carries out the reaction Endonucleolytic cleavage of RNA, removing 5'-extranucleotides from tRNA precursor.. Functionally, part of ribonuclease P, a protein complex that generates mature tRNA molecules by cleaving their 5'-ends. This Thermoplasma volcanium (strain ATCC 51530 / DSM 4299 / JCM 9571 / NBRC 15438 / GSS1) protein is Ribonuclease P protein component 4.